Reading from the N-terminus, the 237-residue chain is Uridylate kinase (237 aa).

12–15 is a binding site for ATP; sequence KLSG. The tract at residues 20 to 25 is involved in allosteric activation by GTP; the sequence is GENGFG. Position 54 (G54) interacts with UMP. Positions 55 and 59 each coordinate ATP. Residues D72 and 133-140 contribute to the UMP site; that span reads TGNPYFST. Residues Y166 and D169 each contribute to the ATP site.

It belongs to the UMP kinase family. Homohexamer.

Its subcellular location is the cytoplasm. The enzyme catalyses UMP + ATP = UDP + ADP. Its pathway is pyrimidine metabolism; CTP biosynthesis via de novo pathway; UDP from UMP (UMPK route): step 1/1. With respect to regulation, allosterically activated by GTP. Inhibited by UTP. In terms of biological role, catalyzes the reversible phosphorylation of UMP to UDP. The protein is Uridylate kinase of Clostridium perfringens (strain ATCC 13124 / DSM 756 / JCM 1290 / NCIMB 6125 / NCTC 8237 / Type A).